The sequence spans 439 residues: Serine hydroxymethyltransferase (439 aa).

126–128 (AHV) contacts (6S)-5,6,7,8-tetrahydrofolate. Lys232 carries the N6-(pyridoxal phosphate)lysine modification.

The protein belongs to the SHMT family. In terms of assembly, homodimer. The cofactor is pyridoxal 5'-phosphate.

It localises to the cytoplasm. It functions in the pathway amino-acid biosynthesis; glycine biosynthesis; glycine from L-serine: step 1/1. In terms of biological role, catalyzes the reversible interconversion of serine and glycine with a modified folate serving as the one-carbon carrier. Also exhibits a pteridine-independent aldolase activity toward beta-hydroxyamino acids, producing glycine and aldehydes, via a retro-aldol mechanism. The sequence is that of Serine hydroxymethyltransferase from Staphylothermus marinus (strain ATCC 43588 / DSM 3639 / JCM 9404 / F1).